The chain runs to 545 residues: Sphingomyelin phosphodiesterase 5 (545 aa).

A mitochondrion-targeting transit peptide spans 1-35 (MSLRESPFPNGFLEGLHAVGWGLIFPCFWFLDRLI). The Mitochondrial matrix segment spans residues 36-64 (AVCISTTLERMWRLEQECYLHPLKVVFGS). The chain crosses the membrane as a helical; Signal-anchor for type II membrane protein span at residues 65–85 (ILFFILFVISTPFALLGFILW). The Mitochondrial intermembrane segment spans residues 86–545 (APLQAIRRPF…LSVSLDSEQN (460 aa)). Mg(2+) is bound at residue Glu-258. Catalysis depends on His-529, which acts as the Proton acceptor.

The protein belongs to the neutral sphingomyelinase family. Requires Mg(2+) as cofactor. The cofactor is Mn(2+).

It is found in the mitochondrion inner membrane. The protein resides in the endoplasmic reticulum membrane. It catalyses the reaction a sphingomyelin + H2O = phosphocholine + an N-acylsphing-4-enine + H(+). The catalysed reaction is N-(hexadecanoyl)-sphing-4-enine-1-phosphocholine + H2O = N-hexadecanoylsphing-4-enine + phosphocholine + H(+). The protein operates within lipid metabolism; sphingolipid metabolism. Its activity is regulated as follows. Activated by the phospholipids cardiolipin, phosphatidylserine, and phosphatidylethanolamine. Strongest activation with cardiolipin. In terms of biological role, catalyzes the hydrolysis of membrane sphingomyelin to form phosphorylcholine and ceramide. In Danio rerio (Zebrafish), this protein is Sphingomyelin phosphodiesterase 5.